The primary structure comprises 247 residues: Synaptogyrin homolog 1 (247 aa).

One can recognise an MARVEL domain in the interval 21 to 175; it reads FFKKPTVLFR…AAFFAWRRYE (155 aa). The next 4 membrane-spanning stretches (helical) occupy residues 25 to 45, 69 to 89, 105 to 125, and 151 to 171; these read PTVL…YSVS, CSFA…LIVL, AVLA…IGFF, and FGIL…FFAW. The disordered stretch occupies residues 206–247; it reads DSTGIGHVGAPPPQSSYQSGAAPQTMQQPPSNPYTQSEGYGY. Polar residues predominate over residues 220–247; it reads SSYQSGAAPQTMQQPPSNPYTQSEGYGY.

It belongs to the synaptogyrin family. Expressed in a wide variety of neurons and is expressed weakly in the non-neuronal distal tip cells. A punctate pattern was observed in the ventral and dorsal nerve cords and the nerve ring. Weak expression is seen in neuronal cell bodies and commissures.

It localises to the membrane. The protein is Synaptogyrin homolog 1 (sng-1) of Caenorhabditis elegans.